The primary structure comprises 377 residues: MTTPWGERVLSRFPEDPRDRLRAWDASDEYLLGHLAEREVPLSGTVVVVGDRWGALVTALAPHRPVQITDSHLAREATRVNLERSGVEPGSVRLLTTQDPPPDRVDVLLVRVPKSLALLEDQLLRLAPALHEGTVVVGTGMVKEIHTSTLRLFERIVGPTRTSLAVKKARLIFAEPDPALKRPANPWPLGYRLPDDVGRLSGRPVVNHAGVFCADRLDIGTRFFLRHLPAPGRFRRVVDLGCGNGVVGTAVSLADPDAELLFTDESFQAVASARATYRANEVAGQAEFRVGDGLAGVPDGSVDLVLNNPPFHSHQATTGATAWRMFTGARRVLRPGGELWVVGNRHLGYHVRLRRLFGNSELVAGDRKFVVLKAVKE.

Belongs to the methyltransferase superfamily. RlmG family.

It is found in the cytoplasm. It carries out the reaction guanosine(1835) in 23S rRNA + S-adenosyl-L-methionine = N(2)-methylguanosine(1835) in 23S rRNA + S-adenosyl-L-homocysteine + H(+). Specifically methylates the guanine in position 1835 (m2G1835) of 23S rRNA. In Streptomyces coelicolor (strain ATCC BAA-471 / A3(2) / M145), this protein is Ribosomal RNA large subunit methyltransferase G.